We begin with the raw amino-acid sequence, 746 residues long: Rhizobactin receptor (746 aa).

An N-terminal signal peptide occupies residues 1 to 26 (MGNNENGGISFCVFVVVIGFGTGAVA). Residues 40 to 47 (EEIVVTGG) carry the TonB box motif. The TBDR plug domain maps to 52 to 163 (QISEIARTIY…TGGIINIITK (112 aa)). The region spanning 169–746 (EPGLHAEVTG…TFAVSLTKVF (578 aa)) is the TBDR beta-barrel domain. The TonB C-terminal box motif lies at 729 to 746 (FDYKGRGRTFAVSLTKVF).

Belongs to the TonB-dependent receptor family.

It is found in the cell outer membrane. In terms of biological role, receptor for the siderophore rhizobactin. This is Rhizobactin receptor (rhtA) from Rhizobium meliloti (strain 1021) (Ensifer meliloti).